The following is a 131-amino-acid chain: uncharacterized protein (131 aa).

Positions D8–C124 constitute a Response regulatory domain. D57 carries the 4-aspartylphosphate modification.

This is an uncharacterized protein from Leptolyngbya boryana (Plectonema boryanum).